Consider the following 546-residue polypeptide: Medium-chain-fatty-acid--CoA ligase (546 aa).

Thr-185 lines the Mg(2+) pocket. ATP contacts are provided by Trp-235 and Thr-329. Glu-330 lines the Mg(2+) pocket. The ATP site is built by Asp-417, Lys-434, Lys-438, and Trp-443.

Belongs to the ATP-dependent AMP-binding enzyme family.

It is found in the cytoplasm. The catalysed reaction is a medium-chain fatty acid + ATP + CoA = a medium-chain fatty acyl-CoA + AMP + diphosphate. The protein operates within lipid metabolism; fatty acid metabolism. The protein is Medium-chain-fatty-acid--CoA ligase of Ectopseudomonas oleovorans (Pseudomonas oleovorans).